A 137-amino-acid polypeptide reads, in one-letter code: uncharacterized protein (137 aa).

This is an uncharacterized protein from Escherichia coli (strain K12).